The sequence spans 213 residues: Large ribosomal subunit protein bL25 (213 aa).

Belongs to the bacterial ribosomal protein bL25 family. CTC subfamily. As to quaternary structure, part of the 50S ribosomal subunit; part of the 5S rRNA/L5/L18/L25 subcomplex. Contacts the 5S rRNA. Binds to the 5S rRNA independently of L5 and L18.

In terms of biological role, this is one of the proteins that binds to the 5S RNA in the ribosome where it forms part of the central protuberance. The chain is Large ribosomal subunit protein bL25 from Mesorhizobium japonicum (strain LMG 29417 / CECT 9101 / MAFF 303099) (Mesorhizobium loti (strain MAFF 303099)).